Reading from the N-terminus, the 192-residue chain is MIRIGILALQGDVSEHLEMTRRTVEEMGIDAEVVRVRTAEEASTVDAIIISGGESTVIGRLMEETGIKDVIIREKKPVMGTCAGMVLLADETDYEQPLLGLIDMKVKRNAFGRQRDSFEDEIDILGRKFHGIFIRAPAVLEVGEGVEVLSELDDMIIAVKDGCNLALAFHPELGEDTGLHEYFIKEVLNCVE.

53–55 (GES) is a binding site for L-glutamine. Cysteine 82 (nucleophile) is an active-site residue. L-glutamine-binding positions include arginine 108 and 134–135 (IR). Active-site charge relay system residues include histidine 170 and glutamate 172.

The protein belongs to the glutaminase PdxT/SNO family. In the presence of PdxS, forms a dodecamer of heterodimers. Only shows activity in the heterodimer.

It carries out the reaction aldehydo-D-ribose 5-phosphate + D-glyceraldehyde 3-phosphate + L-glutamine = pyridoxal 5'-phosphate + L-glutamate + phosphate + 3 H2O + H(+). The enzyme catalyses L-glutamine + H2O = L-glutamate + NH4(+). Its pathway is cofactor biosynthesis; pyridoxal 5'-phosphate biosynthesis. Functionally, catalyzes the hydrolysis of glutamine to glutamate and ammonia as part of the biosynthesis of pyridoxal 5'-phosphate. The resulting ammonia molecule is channeled to the active site of PdxS. This Methanothermobacter thermautotrophicus (strain ATCC 29096 / DSM 1053 / JCM 10044 / NBRC 100330 / Delta H) (Methanobacterium thermoautotrophicum) protein is Pyridoxal 5'-phosphate synthase subunit PdxT.